Reading from the N-terminus, the 324-residue chain is Thiamine thiazole synthase (324 aa).

Substrate-binding positions include cysteine 86, 107–108 (EA), glycine 115, and valine 180. Cysteine 213 is subject to 2,3-didehydroalanine (Cys). Residues aspartate 215, histidine 230, methionine 282, and 292–294 (RMG) each bind substrate.

The protein belongs to the THI4 family. As to quaternary structure, homooctamer. It depends on Fe cation as a cofactor. Post-translationally, during the catalytic reaction, a sulfide is transferred from Cys-213 to a reaction intermediate, generating a dehydroalanine residue.

Its subcellular location is the cytoplasm. It is found in the nucleus. The catalysed reaction is [ADP-thiazole synthase]-L-cysteine + glycine + NAD(+) = [ADP-thiazole synthase]-dehydroalanine + ADP-5-ethyl-4-methylthiazole-2-carboxylate + nicotinamide + 3 H2O + 2 H(+). In terms of biological role, involved in biosynthesis of the thiamine precursor thiazole. Catalyzes the conversion of NAD and glycine to adenosine diphosphate 5-(2-hydroxyethyl)-4-methylthiazole-2-carboxylic acid (ADT), an adenylated thiazole intermediate. The reaction includes an iron-dependent sulfide transfer from a conserved cysteine residue of the protein to a thiazole intermediate. The enzyme can only undergo a single turnover, which suggests it is a suicide enzyme. May have additional roles in adaptation to various stress conditions and in DNA damage tolerance. The polypeptide is Thiamine thiazole synthase (sti35) (Fusarium solani subsp. phaseoli (Nectria haematococca)).